The chain runs to 656 residues: Anion exchange transporter (656 aa).

Over 1 to 75 the chain is Cytoplasmic; the sequence is MTGAKRKKKS…LAFAVLSSVH (75 aa). The chain crosses the membrane as a helical span at residues 76 to 96; that stretch reads PVFGLYGSLFPAIIYAIFGMG. At 97 to 144 the chain is on the extracellular side; sequence HHVATGTFALTSLISANAVERIVPQNMQNLTTQSNTSVLGLSDFEMQR. A helical transmembrane segment spans residues 145 to 165; it reads IHVAAAVSFLGGVIQVAMFVL. Residue Gln166 is a topological domain, cytoplasmic. The helical transmembrane segment at 167 to 187 threads the bilayer; the sequence is LGSATFVVTEPVISAMTTGAA. At 188–202 the chain is on the extracellular side; sequence THVVTSQVKYLLGMK. Residues 203 to 223 form a helical membrane-spanning segment; the sequence is MPYISGPLGFFYIYAYVFENI. The Cytoplasmic portion of the chain corresponds to 224 to 227; that stretch reads KSVR. The helical transmembrane segment at 228 to 248 threads the bilayer; that stretch reads LEALLLSLLSIVVLVLVKELN. Topologically, residues 249 to 254 are extracellular; it reads EQFKRK. A helical transmembrane segment spans residues 255–275; it reads IKVVLPVDLVLIIAASFACYC. The Cytoplasmic portion of the chain corresponds to 276–306; it reads TNMENTYGLEVVGHIPQGIPSPRAPPMNILS. The helical transmembrane segment at 307 to 327 threads the bilayer; the sequence is AVITEAFGVALVGYVASLALA. Residues 328–343 are Extracellular-facing; the sequence is QGSAKKFKYSIDDNQE. A helical membrane pass occupies residues 344–364; sequence FLAHGLSNIVSSFFFCIPSAA. The Cytoplasmic segment spans residues 365–383; it reads AMGRTAGLYSTGAKTQVAC. Transmembrane regions (helical) follow at residues 384-404 and 405-425; these read LISC…LYWL and PMCV…IQFR. The Extracellular portion of the chain corresponds to 426–448; that stretch reads DLKKYWNVDKIDWGIWVSTYVFT. A helical membrane pass occupies residues 449-469; the sequence is ICFAANVGLLFGVVCTIAIVI. Residues 470 to 656 lie on the Cytoplasmic side of the membrane; that stretch reads GRFPRAMTVS…LSKLSDHSEV (187 aa). One can recognise an STAS domain in the interval 492–641; that stretch reads TEMDSETLQQ…ESVSAAISHI (150 aa). The tract at residues 641–656 is membrane targeting; that stretch reads IHSNKNLSKLSDHSEV.

This sequence belongs to the SLC26A/SulP transporter (TC 2.A.53) family. In terms of tissue distribution, expressed in the thyroid gland (at protein level). Expressed in tonsillar high endothelial venule endothelial cells (HEVEC), placenta and in testis, expressed in a subgroup of basal cells in the epididymal ducts.

It is found in the basolateral cell membrane. It localises to the recycling endosome membrane. The protein localises to the apical cell membrane. The protein resides in the lateral cell membrane. It carries out the reaction chloride(in) = chloride(out). The catalysed reaction is iodide(out) = iodide(in). It catalyses the reaction bromide(in) = bromide(out). The enzyme catalyses oxalate(in) = oxalate(out). It carries out the reaction nitrate(in) = nitrate(out). The catalysed reaction is sulfate(in) = sulfate(out). It catalyses the reaction thiocyanate(in) = thiocyanate(out). The enzyme catalyses D-gluconate(in) = D-gluconate(out). It carries out the reaction hydrogencarbonate(in) = hydrogencarbonate(out). The catalysed reaction is hydrogencarbonate(in) + chloride(out) = hydrogencarbonate(out) + chloride(in). With respect to regulation, is active at both alkaline and acidic pH. Activity is inhibited by 4,4'-Di-isothiocyanatostilbene-2,2'-disulfonic acid (DIDS - an inhibitor of several anion channels and transporters). Functionally, acts as an anion channel mediating the transport of chloride, sulfate and oxalate ions. Mediates the transport of bromide, iodide, nitrate, gluconate, thiocyanate and bicarbonate ions. Its permeability towards bicarbonate is weak and increases when pH is above 7. Mediates thiocyanate transport in retinal pigment epithelium cells. Mediates iodide transport in the thyroid gland, playing an important role in the synthesis of thyroid hormones and the maintenance of thyroid function. Although it is an anion channel, according to PubMed:12736153 and PubMed:32119864 it has been shown to exhibit chloride-bicarbonate exchanger activity. This chain is Anion exchange transporter, found in Homo sapiens (Human).